We begin with the raw amino-acid sequence, 386 residues long: 5-amino-6-(D-ribitylamino)uracil--L-tyrosine 4-hydroxyphenyl transferase (386 aa).

The Radical SAM core domain occupies 56 to 303; sequence VSYVINRNLN…MAVARLYLGD (248 aa). Residues cysteine 70, cysteine 74, and cysteine 77 each coordinate [4Fe-4S] cluster.

The protein belongs to the radical SAM superfamily. CofH family. Consists of two subunits, CofG and CofH. Requires [4Fe-4S] cluster as cofactor.

It catalyses the reaction 5-amino-6-(D-ribitylamino)uracil + L-tyrosine + S-adenosyl-L-methionine = 5-amino-5-(4-hydroxybenzyl)-6-(D-ribitylimino)-5,6-dihydrouracil + 2-iminoacetate + 5'-deoxyadenosine + L-methionine + H(+). Its pathway is cofactor biosynthesis; coenzyme F0 biosynthesis. Its function is as follows. Catalyzes the radical-mediated synthesis of 5-amino-5-(4-hydroxybenzyl)-6-(D-ribitylimino)-5,6-dihydrouracil from 5-amino-6-(D-ribitylamino)uracil and L-tyrosine. The sequence is that of 5-amino-6-(D-ribitylamino)uracil--L-tyrosine 4-hydroxyphenyl transferase from Synechococcus elongatus (strain ATCC 33912 / PCC 7942 / FACHB-805) (Anacystis nidulans R2).